The chain runs to 466 residues: Cysteine--tRNA ligase (466 aa).

Zn(2+) is bound at residue Cys-27. The 'HIGH' region motif lies at 29–39 (PTVYNFFHIGN). Residues Cys-207, His-232, and Glu-236 each contribute to the Zn(2+) site. Positions 264–268 (KMSKS) match the 'KMSKS' region motif. Residue Lys-267 coordinates ATP.

The protein belongs to the class-I aminoacyl-tRNA synthetase family. As to quaternary structure, monomer. It depends on Zn(2+) as a cofactor.

It is found in the cytoplasm. The catalysed reaction is tRNA(Cys) + L-cysteine + ATP = L-cysteinyl-tRNA(Cys) + AMP + diphosphate. The protein is Cysteine--tRNA ligase of Clostridium beijerinckii (strain ATCC 51743 / NCIMB 8052) (Clostridium acetobutylicum).